Here is a 444-residue protein sequence, read N- to C-terminus: EMI domain-containing protein 1 (444 aa).

The first 22 residues, 1-22 (MGGPRAWTLLCLGLLLPGGGAA), serve as a signal peptide directing secretion. The EMI domain maps to 33-106 (RRNWCSYVVT…PGHSGVTCEE (74 aa)). 3 disulfide bridges follow: Cys-37–Cys-96, Cys-62–Cys-68, and Cys-95–Cys-104. Thr-42 carries an O-linked (Fuc) threonine glycan. Asn-51 carries N-linked (GlcNAc...) asparagine glycosylation. N-linked (GlcNAc...) asparagine glycosylation occurs at Asn-136. Disordered stretches follow at residues 161-374 (EQTV…KSHW) and 404-444 (PDLG…SERS). Residues 221 to 371 (GPPGPQGPPG…PGPKGDPGEK (151 aa)) enclose the Collagen-like domain. Positions 222 to 231 (PPGPQGPPGR) are enriched in pro residues. The segment covering 232-243 (PGQTGAAGTPGK) has biased composition (low complexity). 2 stretches are compositionally biased toward pro residues: residues 244–264 (MGPP…PVGP) and 292–311 (PTGP…PGLP).

In terms of assembly, homo- or heteromers. In terms of processing, O-fucosylated at Thr-42 within the EMI domain by FUT10/POFUT3 and FUT11/POFUT4.

The protein localises to the secreted. It localises to the extracellular space. It is found in the extracellular matrix. The protein is EMI domain-containing protein 1 (Emid1) of Mus musculus (Mouse).